Consider the following 264-residue polypeptide: Small ribosomal subunit protein eS1 (264 aa).

This sequence belongs to the eukaryotic ribosomal protein eS1 family. In terms of assembly, component of the small ribosomal subunit. Mature ribosomes consist of a small (40S) and a large (60S) subunit. The 40S subunit contains about 33 different proteins and 1 molecule of RNA (18S). The 60S subunit contains about 49 different proteins and 3 molecules of RNA (25S, 5.8S and 5S).

The protein resides in the cytoplasm. The sequence is that of Small ribosomal subunit protein eS1 from Babesia bovis.